Consider the following 859-residue polypeptide: Photoactivated adenylate cyclase subunit beta (859 aa).

A BLUF 1 domain is found at 56-149; sequence LRRLMYLSKS…GRMYGDWHMK (94 aa). Residues 205–333 enclose the Guanylate cyclase 1 domain; it reads VVTFIYLVEF…DCINTTSRIA (129 aa). The tract at residues 420–443 is disordered; it reads RPPIFDDTPKGNPRPRTPGYGGRQ. The BLUF 2 domain maps to 471–563; that stretch reads LTTLTYISQA…RVYPSEWTLT (93 aa). A Guanylate cyclase 2 domain is found at 619 to 748; sequence VMLATDICSF…AVSARVMEVE (130 aa). The disordered stretch occupies residues 813–859; sequence AARSGEKPLTEPEEAKPDFRVSPGRVRHGDSGRRSNSAQGKRSIQVR. A compositionally biased stretch (basic and acidic residues) spans 815–831; that stretch reads RSGEKPLTEPEEAKPDF. The span at 846–859 shows a compositional bias: polar residues; the sequence is RSNSAQGKRSIQVR.

The protein belongs to the adenylyl cyclase class-4/guanylyl cyclase family. As to quaternary structure, heterotetramer of two alpha and two beta subunits. Requires FAD as cofactor.

Its subcellular location is the cell projection. The protein localises to the cilium. It is found in the flagellum. It catalyses the reaction ATP = 3',5'-cyclic AMP + diphosphate. Its activity is regulated as follows. Activity increased by up to 80-fold under blue light. Its function is as follows. Acts as a blue light photoreceptor for the step-up photophobic response. Mediates photoavoidance. This is Photoactivated adenylate cyclase subunit beta from Euglena gracilis.